The chain runs to 95 residues: Small ribosomal subunit protein bS6 (95 aa).

Belongs to the bacterial ribosomal protein bS6 family.

Functionally, binds together with bS18 to 16S ribosomal RNA. The polypeptide is Small ribosomal subunit protein bS6 (Desulfitobacterium hafniense (strain DSM 10664 / DCB-2)).